Reading from the N-terminus, the 504-residue chain is Maturase K (504 aa).

Belongs to the intron maturase 2 family. MatK subfamily.

It is found in the plastid. The protein localises to the chloroplast. In terms of biological role, usually encoded in the trnK tRNA gene intron. Probably assists in splicing its own and other chloroplast group II introns. The protein is Maturase K of Lupinus argenteus (Silvery lupine).